The primary structure comprises 483 residues: Glutamyl-tRNA(Gln) amidotransferase subunit A (483 aa).

Catalysis depends on charge relay system residues lysine 77 and serine 152. The active-site Acyl-ester intermediate is serine 176.

This sequence belongs to the amidase family. GatA subfamily. As to quaternary structure, heterotrimer of A, B and C subunits.

The enzyme catalyses L-glutamyl-tRNA(Gln) + L-glutamine + ATP + H2O = L-glutaminyl-tRNA(Gln) + L-glutamate + ADP + phosphate + H(+). Functionally, allows the formation of correctly charged Gln-tRNA(Gln) through the transamidation of misacylated Glu-tRNA(Gln) in organisms which lack glutaminyl-tRNA synthetase. The reaction takes place in the presence of glutamine and ATP through an activated gamma-phospho-Glu-tRNA(Gln). The chain is Glutamyl-tRNA(Gln) amidotransferase subunit A from Listeria monocytogenes serotype 4b (strain F2365).